A 362-amino-acid polypeptide reads, in one-letter code: S-adenosylmethionine:tRNA ribosyltransferase-isomerase (362 aa).

Belongs to the QueA family. In terms of assembly, monomer.

It localises to the cytoplasm. It carries out the reaction 7-aminomethyl-7-carbaguanosine(34) in tRNA + S-adenosyl-L-methionine = epoxyqueuosine(34) in tRNA + adenine + L-methionine + 2 H(+). It participates in tRNA modification; tRNA-queuosine biosynthesis. Transfers and isomerizes the ribose moiety from AdoMet to the 7-aminomethyl group of 7-deazaguanine (preQ1-tRNA) to give epoxyqueuosine (oQ-tRNA). The protein is S-adenosylmethionine:tRNA ribosyltransferase-isomerase of Deinococcus radiodurans (strain ATCC 13939 / DSM 20539 / JCM 16871 / CCUG 27074 / LMG 4051 / NBRC 15346 / NCIMB 9279 / VKM B-1422 / R1).